An 877-amino-acid polypeptide reads, in one-letter code: MADDGMLMNFEIGDVPIVAKQAFKGGRWKDRLAAKKTAQHRVTKSTNKPSAREIFSEPQHDTSAEEYIGREASSRAPKRQRVDDNYNSYGGRNENTAAYASGKLPSGSINVGGGRKTTFQEEPRTAFVAGKLPPGSINIGGKKATQIEDEGRAAYASGKLPPGSINSGAKKAISFQDETRPAYVSGKLPHGSIDGMRNREMAAVHREIAEGGRKPGQVVSSLFTFNPTSKKTFDEPEEQAEPAKPSNAPLTEEMATFTNLGLSRRLAAHLSTKLDMKAPTAIQKASVQQLVSDDSDAFIQAETGSGKTLAYLLPIVERILALSENGVQIHRDSGLFAIILSPTRELCKQIAAVLEKVLRCAPWIVGTTVNGGESKQSEKARLRKGVNILVATPGRLADHLDNTEVLNVATVRWLVLDEGDRLMELGFEEEIKGIVEKIGRRSVAKANSDMGSLPKRRVTILCSATMKMNVQRLGEISLKDAVHIQADPSEQEKQDKENGVEAQDKAFSAPTQLKQSYAIVPAKLRLVTLTALLKRAFARKGSVMKAIVFISCADSVDFHFSLFSRTPEASAEVVDEEKVDLPALPKSELVKETIAHGTTISNNSNPVILHKLHGSLAQNIRTATLKAFSESADPCVMICTDVASRGLDLPNVDFVIEYDPPFSAEDHLHRVGRTARAGREGRALIFLMPGVEEEYVSILASGYREGKKALTRHTAEDLIQKGFGGIGREWEERATNFQLEVERWSLDSPKYLEMARRGYQSHIRAYATHVANERHIFNMQELHLGHLAKAFALRDKPGSIKVPGLRPAKMTKADRSVAARKAKRGEKAEDKAPEGERVRKQKKMELDLPTVDGNEAAARMKRKMKEHMAAASEFNIG.

Residues 34 to 101 (AKKTAQHRVT…RNENTAAYAS (68 aa)) form a disordered region. The span at 50 to 73 (SAREIFSEPQHDTSAEEYIGREAS) shows a compositional bias: basic and acidic residues. Positions 85–98 (NYNSYGGRNENTAA) are enriched in polar residues. Positions 255-284 (ATFTNLGLSRRLAAHLSTKLDMKAPTAIQK) match the Q motif motif. Residues 288-484 (QQLVSDDSDA…EISLKDAVHI (197 aa)) form the Helicase ATP-binding domain. 301–308 (AETGSGKT) serves as a coordination point for ATP. The short motif at 417–420 (DEGD) is the DEAD box element. The Helicase C-terminal domain maps to 512–719 (QLKQSYAIVP…LTRHTAEDLI (208 aa)). The segment at 814–845 (DRSVAARKAKRGEKAEDKAPEGERVRKQKKME) is disordered. The span at 825–845 (GEKAEDKAPEGERVRKQKKME) shows a compositional bias: basic and acidic residues.

It belongs to the DEAD box helicase family. DDX31/DBP7 subfamily.

It is found in the nucleus. Its subcellular location is the nucleolus. The catalysed reaction is ATP + H2O = ADP + phosphate + H(+). Its function is as follows. ATP-binding RNA helicase involved in the biogenesis of 60S ribosomal subunits and is required for the normal formation of 25S and 5.8S rRNAs. This is ATP-dependent RNA helicase dbp7 (dbp7) from Botryotinia fuckeliana (strain B05.10) (Noble rot fungus).